The chain runs to 175 residues: Inner membrane protein p54 (175 aa).

Residues 32 to 52 form a helical membrane-spanning segment; that stretch reads CTILVAIVVLIIIIIVLIYLF. Over residues 79 to 89 the composition is skewed to polar residues; sequence QWAGATPQPGT. Residues 79–121 form a disordered region; the sequence is QWAGATPQPGTSKPAGATTGNVGKPITDRPATDRPVTNNPVTD. The tract at residues 141–153 is interaction with host DYNLL1; that stretch reads YTTATTQNTASQT.

Belongs to the asfivirus envelope protein p54 family. As to quaternary structure, interacts with the host light chain cytoplasmic dynein DYNLL1; this interaction is critical for intracellular microtubule-dependent virus transport toward viral factories.

The protein localises to the virion membrane. Its subcellular location is the host cytoplasm. The protein resides in the host cytoskeleton. It is found in the host endoplasmic reticulum membrane. Inner envelope protein involved, through its interaction with host dynein, in the intracellular microtubule-dependent transport of viral capsid toward viral factories. Seems to induce caspase-3 activation and apoptosis. Plays a role in virion morphogenesis by recruiting and transforming the host ER membranes into the precursors of the viral envelope. Involved in virus attachment to the host cell. In African swine fever virus (isolate Pig/Kenya/KEN-50/1950) (ASFV), this protein is Inner membrane protein p54.